The chain runs to 257 residues: Pimeloyl-[acyl-carrier protein] methyl ester esterase (257 aa).

The region spanning 16–242 (LVLLHGWGLN…AAHAPFISHP (227 aa)) is the AB hydrolase-1 domain. Substrate-binding positions include Trp-22, 82 to 83 (SL), and 143 to 147 (FLGLQ). Catalysis depends on Ser-82, which acts as the Nucleophile. Catalysis depends on residues Asp-207 and His-235. His-235 contributes to the substrate binding site.

The protein belongs to the AB hydrolase superfamily. Carboxylesterase BioH family. As to quaternary structure, monomer.

Its subcellular location is the cytoplasm. The catalysed reaction is 6-carboxyhexanoyl-[ACP] methyl ester + H2O = 6-carboxyhexanoyl-[ACP] + methanol + H(+). It participates in cofactor biosynthesis; biotin biosynthesis. Its function is as follows. The physiological role of BioH is to remove the methyl group introduced by BioC when the pimeloyl moiety is complete. It allows to synthesize pimeloyl-ACP via the fatty acid synthetic pathway through the hydrolysis of the ester bonds of pimeloyl-ACP esters. This chain is Pimeloyl-[acyl-carrier protein] methyl ester esterase, found in Sodalis glossinidius (strain morsitans).